Here is a 303-residue protein sequence, read N- to C-terminus: Putative monooxygenase p33MONOX (303 aa).

5 disordered regions span residues 1–20, 37–56, 66–96, 156–233, and 260–283; these read MASR…LGKM, LEDP…IPWK, HLDK…KAPV, KLQS…LQKS, and RVGE…GKKQ. Residue threonine 44 is modified to Phosphothreonine. The Flavin-containing monooxygenase motif motif lies at 67 to 77; the sequence is LDKTEEGAASV. Polar residues predominate over residues 76 to 89; sequence SVSSLAVTPSPATD. Over residues 170-183 the composition is skewed to low complexity; sequence ASAQSTPSSTPHAS. Position 175 is a phosphothreonine (threonine 175). Serine 183 carries the post-translational modification Phosphoserine.

Belongs to the P33MONOX family. As to quaternary structure, interacts with NELFB, NOL12 and PRNP. Expressed in neuronal pyramidal cells of the hippocampus and in the neurons of the cortex.

The protein localises to the cytoplasm. In terms of biological role, potential NADPH-dependent oxidoreductase. May be involved in the regulation of neuronal survival, differentiation and axonal outgrowth. The chain is Putative monooxygenase p33MONOX (P33monox) from Mus musculus (Mouse).